Reading from the N-terminus, the 390-residue chain is 8-amino-7-oxononanoate synthase (390 aa).

Arg19 is a binding site for substrate. 106 to 107 (GY) contributes to the pyridoxal 5'-phosphate binding site. His131 serves as a coordination point for substrate. 3 residues coordinate pyridoxal 5'-phosphate: Ser176, His204, and Thr233. Residue Lys236 is modified to N6-(pyridoxal phosphate)lysine. Thr350 is a binding site for substrate.

This sequence belongs to the class-II pyridoxal-phosphate-dependent aminotransferase family. BioF subfamily. Homodimer. It depends on pyridoxal 5'-phosphate as a cofactor.

It catalyses the reaction 6-carboxyhexanoyl-[ACP] + L-alanine + H(+) = (8S)-8-amino-7-oxononanoate + holo-[ACP] + CO2. Its pathway is cofactor biosynthesis; biotin biosynthesis. In terms of biological role, catalyzes the decarboxylative condensation of pimeloyl-[acyl-carrier protein] and L-alanine to produce 8-amino-7-oxononanoate (AON), [acyl-carrier protein], and carbon dioxide. This chain is 8-amino-7-oxononanoate synthase, found in Pseudomonas putida (strain GB-1).